Here is a 473-residue protein sequence, read N- to C-terminus: Beta-secretase 1 (473 aa).

The signal sequence occupies residues 1–21; sequence MAPALPWLLLWVGSGVLPVHG. Positions 22–45 are excised as a propeptide; the sequence is TQDGIRLPLRSGLAGAPLGLRLPR. The Extracellular portion of the chain corresponds to 22–429; that stretch reads TQDGIRLPLR…PQTDESTLMT (408 aa). The Peptidase A1 domain maps to 72–388; it reads YYVEMTVGSP…DRARKRIGFA (317 aa). Residue Asp-90 is part of the active site. Lys-123 is modified (N6-acetyllysine). N-linked (GlcNAc...) asparagine glycans are attached at residues Asn-150, Asn-169, and Asn-195. Cystine bridges form between Cys-188-Cys-392, Cys-250-Cys-415, and Cys-302-Cys-352. Lys-247, Lys-251, and Lys-257 each carry N6-acetyllysine. Asp-261 is an active-site residue. Residues Lys-271, Lys-272, and Lys-279 each carry the N6-acetyllysine modification. Asn-326 carries an N-linked (GlcNAc...) asparagine glycan. A helical transmembrane segment spans residues 430-450; the sequence is IAYVMAAICALFMLPLCLMVC. 4 S-palmitoyl cysteine lipidation sites follow: Cys-446, Cys-450, Cys-454, and Cys-457. Over 451–473 the chain is Cytoplasmic; the sequence is QWRCLRCLRHQHDDFADDISLLK. The interval 451-473 is interaction with RTN3; sequence QWRCLRCLRHQHDDFADDISLLK. Residues 468–472 carry the DXXLL motif; sequence DISLL. Residue Ser-470 is modified to Phosphoserine. Residue Lys-473 forms a Glycyl lysine isopeptide (Lys-Gly) (interchain with G-Cter in ubiquitin) linkage.

The protein belongs to the peptidase A1 family. In terms of assembly, monomer. Interacts (via DXXLL motif) with GGA1, GGA2 and GGA3 (via their VHS domain); the interaction highly increases when BACE1 is phosphorylated at Ser-470. Interacts with RTN1; RTN2; RTN3 and RTN4; the interaction leads to inhibition of amyloid precursor protein processing. Interacts with SNX6. Interacts with PCSK9. Interacts with NAT8 and NAT8B. Interacts with BIN1. Interacts (via extracellular domain) with ADAM10 (via extracellular domain). Interacts with SORL1; this interaction may affect binding with APP and hence reduce APP cleavage. Interacts with NRDC AND NRG1. In terms of processing, palmitoylation mediates lipid raft localization. Post-translationally, acetylated in the endoplasmic reticulum at Lys-123, Lys-247, Lys-251, Lys-257, Lys-271, Lys-272, and Lys-279. Acetylation by NAT8 and NAT8B is transient and deacetylation probably occurs in the Golgi. Acetylation regulates the maturation, the transport to the plasma membrane, the stability and the expression of the protein. Ubiquitinated at Lys-473, ubiquitination leads to lysosomal degradation. Monoubiquitinated and 'Lys-63'-linked polyubitinated. Deubiquitnated by USP8; inhibits lysosomal degradation. In terms of processing, phosphorylation at Ser-470 is required for interaction with GGA1 and retrograded transport from endosomal compartments to the trans-Golgi network. Non-phosphorylated BACE1 enters a direct recycling route to the cell surface. Post-translationally, N-Glycosylated. Addition of a bisecting N-acetylglucosamine by MGAT3 blocks lysosomal targeting, further degradation and is required for maintaining stability under stress conditions.

The protein localises to the cell membrane. It is found in the golgi apparatus. The protein resides in the trans-Golgi network. It localises to the endoplasmic reticulum. Its subcellular location is the endosome. The protein localises to the cell surface. It is found in the cytoplasmic vesicle membrane. The protein resides in the membrane raft. It localises to the lysosome. Its subcellular location is the late endosome. The protein localises to the early endosome. It is found in the recycling endosome. The protein resides in the cell projection. It localises to the axon. Its subcellular location is the dendrite. The enzyme catalyses Broad endopeptidase specificity. Cleaves Glu-Val-Asn-Leu-|-Asp-Ala-Glu-Phe in the Swedish variant of Alzheimer's amyloid precursor protein.. With respect to regulation, inhibited by RTN3 and RTN4. Functionally, responsible for the proteolytic processing of the amyloid precursor protein (APP). Cleaves at the N-terminus of the A-beta peptide sequence, between residues 671 and 672 of APP, leads to the generation and extracellular release of beta-cleaved soluble APP, and a corresponding cell-associated C-terminal fragment which is later released by gamma-secretase. Cleaves CHL1. This Cavia porcellus (Guinea pig) protein is Beta-secretase 1 (BACE1).